The chain runs to 426 residues: UDP-N-acetylglucosamine 1-carboxyvinyltransferase 2 (426 aa).

Residue Lys22 to Asn23 coordinates phosphoenolpyruvate. Arg92 provides a ligand contact to UDP-N-acetyl-alpha-D-glucosamine. The active-site Proton donor is the Asp116. Residues Arg121–Gln125, Asp307, and Ile329 contribute to the UDP-N-acetyl-alpha-D-glucosamine site.

This sequence belongs to the EPSP synthase family. MurA subfamily.

It is found in the cytoplasm. It catalyses the reaction phosphoenolpyruvate + UDP-N-acetyl-alpha-D-glucosamine = UDP-N-acetyl-3-O-(1-carboxyvinyl)-alpha-D-glucosamine + phosphate. It participates in cell wall biogenesis; peptidoglycan biosynthesis. Its function is as follows. Cell wall formation. Adds enolpyruvyl to UDP-N-acetylglucosamine. The protein is UDP-N-acetylglucosamine 1-carboxyvinyltransferase 2 of Lactiplantibacillus plantarum (strain ATCC BAA-793 / NCIMB 8826 / WCFS1) (Lactobacillus plantarum).